The following is a 214-amino-acid chain: Adenylate kinase (214 aa).

Residue 10–15 (GAGKGT) participates in ATP binding. The interval 30–59 (STGDMLRAAIKAGTELGKQAKAVIDAGQLV) is NMP. Residues T31, R36, 57–59 (QLV), 85–88 (GFPR), and Q92 each bind AMP. The LID stretch occupies residues 122–159 (GRRAHLPSGRTYHVVYNPPKVEGKDDVTGEDLVVRDDD). ATP contacts are provided by residues R123 and 132–133 (TY). Positions 156 and 167 each coordinate AMP. Residue K200 coordinates ATP.

Belongs to the adenylate kinase family. Monomer.

The protein resides in the cytoplasm. The catalysed reaction is AMP + ATP = 2 ADP. It participates in purine metabolism; AMP biosynthesis via salvage pathway; AMP from ADP: step 1/1. Functionally, catalyzes the reversible transfer of the terminal phosphate group between ATP and AMP. Plays an important role in cellular energy homeostasis and in adenine nucleotide metabolism. This Vibrio campbellii (strain ATCC BAA-1116) protein is Adenylate kinase.